We begin with the raw amino-acid sequence, 710 residues long: Putative membrane protein IgaA homolog (710 aa).

Residue Met1 is a topological domain, periplasmic. The helical transmembrane segment at 2–22 (STILIFIAALLACSLLAIWRF) threads the bilayer. Topologically, residues 23-204 (RVKSRRGSLP…YALSRPAGLR (182 aa)) are cytoplasmic. A run of 2 helical transmembrane segments spans residues 205–225 (EALLIVASFLLFFFCLITPDV) and 226–246 (FVPWMIGGAILLLAAGLWGLF). Topologically, residues 247–339 (APPSKSALRE…KNFPLQHWLR (93 aa)) are cytoplasmic. Residues 340-360 (STVIAIGSLLVLFMLLFWIPL) form a helical membrane-spanning segment. The Periplasmic segment spans residues 361–656 (DMPIKFTLSW…PDKSGWWRYL (296 aa)). A helical membrane pass occupies residues 657-677 (GTTLLMLAMIVSAVYNGIQAF). Topologically, residues 678–710 (RRYQRHRTRMADIQEYYESCLNPRLTVSPENLI) are cytoplasmic.

Belongs to the IgaA family.

It is found in the cell inner membrane. This Salmonella typhi protein is Putative membrane protein IgaA homolog (yrfF).